Reading from the N-terminus, the 233-residue chain is Phosphoribosylformylglycinamidine synthase subunit PurQ (233 aa).

A Glutamine amidotransferase type-1 domain is found at Ser3–Ala233. Cys87 serves as the catalytic Nucleophile. Residues His204 and Glu206 contribute to the active site.

In terms of assembly, part of the FGAM synthase complex composed of 1 PurL, 1 PurQ and 2 PurS subunits.

It is found in the cytoplasm. It carries out the reaction N(2)-formyl-N(1)-(5-phospho-beta-D-ribosyl)glycinamide + L-glutamine + ATP + H2O = 2-formamido-N(1)-(5-O-phospho-beta-D-ribosyl)acetamidine + L-glutamate + ADP + phosphate + H(+). The catalysed reaction is L-glutamine + H2O = L-glutamate + NH4(+). It participates in purine metabolism; IMP biosynthesis via de novo pathway; 5-amino-1-(5-phospho-D-ribosyl)imidazole from N(2)-formyl-N(1)-(5-phospho-D-ribosyl)glycinamide: step 1/2. Part of the phosphoribosylformylglycinamidine synthase complex involved in the purines biosynthetic pathway. Catalyzes the ATP-dependent conversion of formylglycinamide ribonucleotide (FGAR) and glutamine to yield formylglycinamidine ribonucleotide (FGAM) and glutamate. The FGAM synthase complex is composed of three subunits. PurQ produces an ammonia molecule by converting glutamine to glutamate. PurL transfers the ammonia molecule to FGAR to form FGAM in an ATP-dependent manner. PurS interacts with PurQ and PurL and is thought to assist in the transfer of the ammonia molecule from PurQ to PurL. This is Phosphoribosylformylglycinamidine synthase subunit PurQ from Rhodopseudomonas palustris (strain ATCC BAA-98 / CGA009).